Reading from the N-terminus, the 429-residue chain is Histidine--tRNA ligase (429 aa).

Belongs to the class-II aminoacyl-tRNA synthetase family. Homodimer.

The protein localises to the cytoplasm. The enzyme catalyses tRNA(His) + L-histidine + ATP = L-histidyl-tRNA(His) + AMP + diphosphate + H(+). The polypeptide is Histidine--tRNA ligase (Prochlorococcus marinus subsp. pastoris (strain CCMP1986 / NIES-2087 / MED4)).